Here is a 164-residue protein sequence, read N- to C-terminus: NADH-quinone oxidoreductase subunit I (164 aa).

4Fe-4S ferredoxin-type domains lie at 55-84 (RRYEGGEERCVACKLCEAICPAQAIYIEID) and 95-124 (KVYDIDLFKCIYCGLCEEACPVEAIVMGPY). Residues C64, C67, C70, C74, C104, C107, C110, and C114 each coordinate [4Fe-4S] cluster.

The protein belongs to the complex I 23 kDa subunit family. In terms of assembly, NDH-1 is composed of 14 different subunits. Subunits NuoA, H, J, K, L, M, N constitute the membrane sector of the complex. [4Fe-4S] cluster serves as cofactor.

It localises to the cell inner membrane. The enzyme catalyses a quinone + NADH + 5 H(+)(in) = a quinol + NAD(+) + 4 H(+)(out). Functionally, NDH-1 shuttles electrons from NADH, via FMN and iron-sulfur (Fe-S) centers, to quinones in the respiratory chain. The immediate electron acceptor for the enzyme in this species is believed to be ubiquinone. Couples the redox reaction to proton translocation (for every two electrons transferred, four hydrogen ions are translocated across the cytoplasmic membrane), and thus conserves the redox energy in a proton gradient. This is NADH-quinone oxidoreductase subunit I from Magnetococcus marinus (strain ATCC BAA-1437 / JCM 17883 / MC-1).